Reading from the N-terminus, the 304-residue chain is HPr kinase/phosphorylase (304 aa).

Catalysis depends on residues His136 and Lys157. 151–158 (GESGIGKS) is a binding site for ATP. Ser158 serves as a coordination point for Mg(2+). Catalysis depends on Asp175, which acts as the Proton acceptor; for phosphorylation activity. Proton donor; for dephosphorylation activity. Residues 198–207 (LEVRGMGIID) are important for the catalytic mechanism of both phosphorylation and dephosphorylation. A Mg(2+)-binding site is contributed by Glu199. Residue Arg240 is part of the active site. The tract at residues 261 to 266 (PIRPGR) is important for the catalytic mechanism of dephosphorylation.

Belongs to the HPrK/P family. As to quaternary structure, homohexamer. It depends on Mg(2+) as a cofactor.

It catalyses the reaction [HPr protein]-L-serine + ATP = [HPr protein]-O-phospho-L-serine + ADP + H(+). The enzyme catalyses [HPr protein]-O-phospho-L-serine + phosphate + H(+) = [HPr protein]-L-serine + diphosphate. Catalyzes the ATP- as well as the pyrophosphate-dependent phosphorylation of a specific serine residue in HPr, a phosphocarrier protein of the phosphoenolpyruvate-dependent sugar phosphotransferase system (PTS). HprK/P also catalyzes the pyrophosphate-producing, inorganic phosphate-dependent dephosphorylation (phosphorolysis) of seryl-phosphorylated HPr (P-Ser-HPr). The two antagonistic activities of HprK/P are regulated by several intracellular metabolites, which change their concentration in response to the absence or presence of rapidly metabolisable carbon sources (glucose, fructose, etc.) in the growth medium. Therefore, by controlling the phosphorylation state of HPr, HPrK/P is a sensor enzyme that plays a major role in the regulation of carbon metabolism and sugar transport: it mediates carbon catabolite repression (CCR), and regulates PTS-catalyzed carbohydrate uptake and inducer exclusion. In Clostridium acetobutylicum (strain ATCC 824 / DSM 792 / JCM 1419 / IAM 19013 / LMG 5710 / NBRC 13948 / NRRL B-527 / VKM B-1787 / 2291 / W), this protein is HPr kinase/phosphorylase.